Here is a 285-residue protein sequence, read N- to C-terminus: UstYa family oxidase phomYe (285 aa).

The helical transmembrane segment at 32–54 (LFYGWKGIAFLSTLTNVLFISGF) threads the bilayer. Residues 143–165 (YGFGTPLTGPGSEGNEHDPTPWT) form a disordered region. The HXXHC 1 signature appears at 177-181 (HQLHC). N202 is a glycosylation site (N-linked (GlcNAc...) asparagine). The HXXHC 2 motif lies at 209-213 (HVDHC).

Belongs to the ustYa family.

The protein localises to the membrane. Its pathway is mycotoxin biosynthesis. Its function is as follows. UstYa family oxidase; part of the gene cluster that mediates the biosynthesis of the phomopsins, a group of hexapeptide mycotoxins which infects lupins and causes lupinosis disease in livestock. Within the pathway, phomYe catalyzes the desaturation of the Pro moiety into 3,4-dehydroproline (dPro). The pathway starts with the processing of the precursor phomA by several endopeptidases including kexin proteases as well as the cluster-specific S41 family peptidase phomP1 and the oligopeptidase phomG to produce 10 identical copies of the hexapeptide Tyr-Val-Ile-Pro-Ile-Asp. After being excised from the precursor peptide, the core peptides are cyclized and modified post-translationally by enzymes encoded within the gene cluster. The timing and order of proteolysis of the phomA precursor and PTMs are still unknown. Two tyrosinase-like enzymes, phomQ1 and phomQ2, catalyze the chlorination and hydroxylation of Tyr, respectively. PhomYb, is proposed to be involved in the construction of the macrocyclic structure. The other 4 ustYa family proteins may be involved in PTMs that generate the unique structure of phomopsin A. PhomYa is required for the hydroxylation of C-beta of Tyr. PhomYc, phomYd, and phomYe are responsible for the biosynthesis of 2,3-dehydroisoleucine (dIle), 2,3-dehydroaspartic acid (dAsp), and 3,4-dehydroproline (dPro), respectively. While dIle formation by phomYc is indispensable for the installation of dAsp by phomYd, the order of the other PTMs have not been elucidated yet. Most of the biosynthetic enzymes likely have broad substrate specificity, and thus, there might be a metabolic grid from a precursor to phomopsin A. The enzyme(s) responsible for the biosynthesis of 3,4-dehydrovaline (dVal) have also not been identified yet. Finally, phomM acts as an S-adenosylmethionine-dependent alpha-N-methyltransferase that catalyzes two successive N-methylation reactions, converting N-desmethyl-phomopsin A to phomopsin A and phomopsin A further to an N,N-dimethylated congener called phomopsin E. The sequence is that of UstYa family oxidase phomYe from Diaporthe leptostromiformis (Lupinosis disease fungus).